Consider the following 161-residue polypeptide: Small ribosomal subunit protein bS6 (161 aa).

The segment at 107–161 is disordered; sequence KGDERERGFRGPKPAGRFESGRGGAGGARRGYDDREEFRARNEREDGRDTDGEAE. Over residues 136–161 the composition is skewed to basic and acidic residues; sequence RGYDDREEFRARNEREDGRDTDGEAE.

It belongs to the bacterial ribosomal protein bS6 family.

Its function is as follows. Binds together with bS18 to 16S ribosomal RNA. The protein is Small ribosomal subunit protein bS6 of Gluconacetobacter diazotrophicus (strain ATCC 49037 / DSM 5601 / CCUG 37298 / CIP 103539 / LMG 7603 / PAl5).